The sequence spans 129 residues: GEL complex subunit OPTI (129 aa).

Topologically, residues 1–44 (MSGGRRKEEPPQPQLANGALKVSVWSKVLRSDAAWEDKDEFLDV) are cytoplasmic. The chain crosses the membrane as a helical span at residues 45 to 65 (IYWFRQIIAVVLGVIWGVLPL). Position 66 (Arg-66) is a topological domain, lumenal. A helical membrane pass occupies residues 67-84 (GFLGIAGFCVINAGVLYL). Topologically, residues 85–103 (YFSNYLQIDEEEYGGTWEL) are cytoplasmic. A helical transmembrane segment spans residues 104-127 (TKEGFMTSFALFMVIWIIFYTAIH). The Lumenal portion of the chain corresponds to 128 to 129 (YD).

The protein belongs to the EMC6 family. As to quaternary structure, component of the GET- and EMC-like (GEL) complex, composed of RAB5IF/OPTI and TMCO1. The GEL complex is part of the multi-pass translocon (MPT) complex, composed of three subcomplexes, the GEL complex (composed of RAB5IF/OPTI and TMCO1), the BOS complex (composed of NCLN/Nicalin, NOMO1 and TMEM147) and the PAT complex (composed of WDR83OS/Asterix and CCDC47). The MPT complex associates with the SEC61 complex. Interacts with NDUFS3, NDUFA4, NDUFV1, NDUFA9 and NDUFS8 of the mitochondrial membrane respiratory chain NADH dehydrogenase (Complex I). Interacts with UQCRC2 of the ubiquinol-cytochrome c reductase complex (Complex III). Interacts with COX5A and COX7C of the cytochrome c oxidase complex (Complex IV).

It localises to the endoplasmic reticulum membrane. The protein resides in the mitochondrion inner membrane. Functionally, component of the multi-pass translocon (MPT) complex that mediates insertion of multi-pass membrane proteins into the lipid bilayer of membranes. The MPT complex takes over after the SEC61 complex: following membrane insertion of the first few transmembrane segments of proteins by the SEC61 complex, the MPT complex occludes the lateral gate of the SEC61 complex to promote insertion of subsequent transmembrane regions. Within the MPT complex, the GEL subcomplex may mediate insertion of transmembrane regions into the membrane. In addition to its role in multi-pass membrane insertion, RAB5IF/OPTI also acts as an assembly factor for mitochondrial respiratory complexes. This Canis lupus familiaris (Dog) protein is GEL complex subunit OPTI (RAB5IF).